A 243-amino-acid polypeptide reads, in one-letter code: UPF0758 protein PCC7424_2073 (243 aa).

In terms of domain architecture, MPN spans 112–235; the sequence is VEINDPVSAV…HQSLRTVTDL (124 aa). Residues His184, His186, and Asp197 each coordinate Zn(2+). The JAMM motif motif lies at 184–197; sequence HNHPSGNVAPSQED.

It belongs to the UPF0758 family.

In Gloeothece citriformis (strain PCC 7424) (Cyanothece sp. (strain PCC 7424)), this protein is UPF0758 protein PCC7424_2073.